Here is a 1140-residue protein sequence, read N- to C-terminus: GPI inositol-deacylase (1140 aa).

A disordered region spans residues 1 to 84 (MHRRSSGSSP…TTWASHDPPR (84 aa)). A compositionally biased stretch (polar residues) spans 55 to 78 (GKSTPRSRNSSTWRTLSSATTTWA). A glycan (N-linked (GlcNAc...) asparagine) is linked at Asn63. The chain crosses the membrane as a helical span at residues 117 to 137 (SCSILTALTTILACVFLFSIV). Ser304 is an active-site residue. A helical membrane pass occupies residues 782-802 (LVMRYRTVFAAFPLLVVSLTL). Residue Asn862 is glycosylated (N-linked (GlcNAc...) asparagine). 7 helical membrane-spanning segments follow: residues 882–902 (AFFWFLVPLFGLICVGVCVLL), 905–925 (VALIVLQILSVVYGLWNSKSG), 952–972 (VLLVLVSTAIPYQFAYLVACI), 1002–1022 (SVFILMLWVLPINILVLLVWA), 1039–1059 (VLSIMPFIILVETMTTGSMIP), 1070–1090 (SVLLFCIAVYSAVYGVSYAYI), and 1094–1114 (LVNILAGWLVSIYFFRSGFSL).

It belongs to the GPI inositol-deacylase family.

The protein resides in the endoplasmic reticulum membrane. Involved in inositol deacylation of GPI-anchored proteins which plays important roles in the quality control and ER-associated degradation of GPI-anchored proteins. The sequence is that of GPI inositol-deacylase (bst1) from Emericella nidulans (strain FGSC A4 / ATCC 38163 / CBS 112.46 / NRRL 194 / M139) (Aspergillus nidulans).